The primary structure comprises 230 residues: Ion-translocating oxidoreductase complex subunit E (230 aa).

Helical transmembrane passes span 18–38 (ALVQ…ATNA), 39–59 (LGLG…VSAL), 63–83 (TPAE…VSAV), 86–106 (LINA…PLIV), 125–145 (WLSA…MFVL), and 182–202 (PFLL…MLAV).

It belongs to the NqrDE/RnfAE family. As to quaternary structure, the complex is composed of six subunits: RsxA, RsxB, RsxC, RsxD, RsxE and RsxG.

It localises to the cell inner membrane. Functionally, part of a membrane-bound complex that couples electron transfer with translocation of ions across the membrane. Required to maintain the reduced state of SoxR. This chain is Ion-translocating oxidoreductase complex subunit E, found in Salmonella newport (strain SL254).